A 299-amino-acid chain; its full sequence is Recombination-associated protein RdgC (299 aa).

This sequence belongs to the RdgC family.

It localises to the cytoplasm. The protein resides in the nucleoid. In terms of biological role, may be involved in recombination. This chain is Recombination-associated protein RdgC, found in Cupriavidus necator (strain ATCC 17699 / DSM 428 / KCTC 22496 / NCIMB 10442 / H16 / Stanier 337) (Ralstonia eutropha).